We begin with the raw amino-acid sequence, 298 residues long: MMRIALYLLTNLAVIVVASITLSLLGVDSYLAQNGSGLNLTSLLIFSAVFGFAGSLISLLISKPMAKWSAKVQTINEPSNQAERWLLDTVKELSDKAGIKMPEVGVFPAQQSNAFATGWNKNDALVAVSQGLLTRFRPEEVRAVLAHEIGHVANGDMVTLSLIQGVVNTFVIFAARVVGYVIDSFMRRDGGGGLGFGYYIVVIVTEIIFGIAASTIVMKFSRFREYRADVAGAQLADRRDMISALQRLKAEAKVPNQMPDSLVAFGINSGVKQGLKALFSSHPPLDDRIAALQEKRHG.

A run of 2 helical transmembrane segments spans residues Ile-4–Leu-24 and Thr-41–Ile-61. His-147 lines the Zn(2+) pocket. Residue Glu-148 is part of the active site. His-151 is a Zn(2+) binding site. The next 2 helical transmembrane spans lie at Leu-162–Ile-182 and Gly-193–Ala-213. Glu-225 lines the Zn(2+) pocket.

The protein belongs to the peptidase M48B family. Zn(2+) is required as a cofactor.

It is found in the cell inner membrane. The protein is Protease HtpX of Alcanivorax borkumensis (strain ATCC 700651 / DSM 11573 / NCIMB 13689 / SK2).